The following is a 262-amino-acid chain: Small ribosomal subunit protein eS1 (262 aa).

Residues 234–251 are compositionally biased toward basic and acidic residues; that stretch reads DPKEDSGKNVKSLPESKE. The interval 234–262 is disordered; the sequence is DPKEDSGKNVKSLPESKEATNILTAELKH.

The protein belongs to the eukaryotic ribosomal protein eS1 family. As to quaternary structure, component of the small ribosomal subunit. Mature ribosomes consist of a small (40S) and a large (60S) subunit. The 40S subunit contains about 33 different proteins and 1 molecule of RNA (18S). The 60S subunit contains about 49 different proteins and 3 molecules of RNA (25S, 5.8S and 5S).

It is found in the cytoplasm. In Plasmodium yoelii yoelii, this protein is Small ribosomal subunit protein eS1.